The primary structure comprises 550 residues: CTP synthase (550 aa).

The interval M1 to L272 is amidoligase domain. S14 is a CTP binding site. S14 provides a ligand contact to UTP. Position 15-20 (S15–L20) interacts with ATP. An L-glutamine-binding site is contributed by Y55. ATP is bound at residue D72. Mg(2+) is bound by residues D72 and E146. Residues D153 to E155, K193 to Q198, and K229 contribute to the CTP site. Residues K193–Q198 and K229 contribute to the UTP site. The 254-residue stretch at T297–Q550 folds into the Glutamine amidotransferase type-1 domain. G359 is an L-glutamine binding site. The active-site Nucleophile; for glutamine hydrolysis is the C386. Residues L387–Q390, E410, and R478 each bind L-glutamine. Active-site residues include H523 and E525.

The protein belongs to the CTP synthase family. As to quaternary structure, homotetramer.

It catalyses the reaction UTP + L-glutamine + ATP + H2O = CTP + L-glutamate + ADP + phosphate + 2 H(+). The catalysed reaction is L-glutamine + H2O = L-glutamate + NH4(+). It carries out the reaction UTP + NH4(+) + ATP = CTP + ADP + phosphate + 2 H(+). Its pathway is pyrimidine metabolism; CTP biosynthesis via de novo pathway; CTP from UDP: step 2/2. Allosterically activated by GTP, when glutamine is the substrate; GTP has no effect on the reaction when ammonia is the substrate. The allosteric effector GTP functions by stabilizing the protein conformation that binds the tetrahedral intermediate(s) formed during glutamine hydrolysis. Inhibited by the product CTP, via allosteric rather than competitive inhibition. In terms of biological role, catalyzes the ATP-dependent amination of UTP to CTP with either L-glutamine or ammonia as the source of nitrogen. Regulates intracellular CTP levels through interactions with the four ribonucleotide triphosphates. The polypeptide is CTP synthase (Lawsonia intracellularis (strain PHE/MN1-00)).